Consider the following 537-residue polypeptide: Pheophorbide a oxygenase, chloroplastic (537 aa).

A chloroplast-targeting transit peptide spans 1–49 (MSVVLLSSTSATITKSQSKKIPFLSPTTKFPLKVSISPSRSKLFHNPLR). The interval 51 to 77 (AAPPSVPTSDSTEEKRIEEEYGGDKEE) is disordered. Positions 62 to 77 (TEEKRIEEEYGGDKEE) are enriched in basic and acidic residues. The 113-residue stretch at 88 to 200 (WYPVSLVEDL…TMVSQGLLFV (113 aa)) folds into the Rieske domain. 4 residues coordinate [2Fe-2S] cluster: cysteine 130, histidine 132, cysteine 150, and histidine 153.

As to quaternary structure, interacts with HCAR, SGR1, RCCR, PPH and the LHCII complex. Part of a SGR1-CCE-LHCII complex, which acts in chlorophyll breakdown.

Its subcellular location is the plastid. The protein resides in the chloroplast thylakoid membrane. It carries out the reaction pheophorbide a + 2 reduced [2Fe-2S]-[ferredoxin] + O2 + 2 H(+) = red chlorophyll catabolite + 2 oxidized [2Fe-2S]-[ferredoxin]. It functions in the pathway porphyrin-containing compound metabolism; chlorophyll degradation. Might be regulated by a phosphorylation/dephosphorylation mechanism. Catalyzes the key reaction of chlorophyll catabolism, porphyrin macrocycle cleavage of pheophorbide a (pheide a) to a primary fluorescent catabolite (pFCC). Works in a two-step reaction with red chlorophyll catabolite reductase (RCCR). Creates the intermediate RCC through the opening of the porphyrin macrocycle by the introduction of one atom of molecular oxygen at the alpha-methine bridge. Seems to be specific for pheide a. Belongs to the chlorophyll catabolic enzymes (CCEs). This Arabidopsis thaliana (Mouse-ear cress) protein is Pheophorbide a oxygenase, chloroplastic (PAO).